A 261-amino-acid chain; its full sequence is MASPDWGYDDKNGPEQWSKLYPIANGNNQSPVDIKTSEAKHDTSLKPISVSYNPATAKEIINVGHSFHVNFEDNDNRSVLKGGPFSDSYRLFQFHFHWGSSNEYGSEHTVDGVKYSSELHIVHWNSAKYSSLAEAVSKADGLAVIGVLMKVGEANPKLQKVLDALHAIKTKGKRAPFTNFDPSTLLPSSLDFWTYSGSLTHPPLYESVTWIICKESISVSSEQLAQFRSLLSNVEGSNPVPIQRNNRPTQPLKGRTVRASF.

Ala2 bears the N-acetylalanine mark. The region spanning 4-261 (PDWGYDDKNG…LKGRTVRASF (258 aa)) is the Alpha-carbonic anhydrase domain. His65 serves as the catalytic Proton donor/acceptor. Zn(2+) contacts are provided by His95, His97, and His120. Substrate-binding positions include Thr200 and 200–201 (TH). The interval 238-261 (NPVPIQRNNRPTQPLKGRTVRASF) is disordered.

This sequence belongs to the alpha-carbonic anhydrase family. Zn(2+) serves as cofactor.

Its subcellular location is the cytoplasm. The catalysed reaction is hydrogencarbonate + H(+) = CO2 + H2O. It carries out the reaction urea = cyanamide + H2O. With respect to regulation, inhibited by acetazolamide. Functionally, catalyzes the reversible hydration of carbon dioxide. Can hydrate cyanamide to urea. In Macaca mulatta (Rhesus macaque), this protein is Carbonic anhydrase 1 (CA1).